Here is a 1521-residue protein sequence, read N- to C-terminus: uncharacterized protein (1521 aa).

Disordered stretches follow at residues 1 to 20 (MENNNGNSVINKSNDKNSNN), 85 to 124 (TFQSPPQPINTSSTQTNYNNQNNPNPNPNPSPNPNSNNNN), 218 to 254 (ASSPSTPSTPSSSSRSQQQQQQQQQQSSSSSLSSSSS), 431 to 482 (VLNS…TGIT), and 735 to 797 (NNNN…HQQQ). 3 stretches are compositionally biased toward low complexity: residues 94–108 (NTSSTQTNYNNQNNP), 219–254 (SSPSTPSTPSSSSRSQQQQQQQQQQSSSSSLSSSSS), and 431–454 (VLNSNSNSSSGGASSSSGGSNNTS). The span at 455 to 464 (PAIVTSASIH) shows a compositional bias: polar residues. Composition is skewed to low complexity over residues 465–482 (NSNGNSNENEIEKSTGIT) and 735–762 (NNNNNNNNNNNNNNNNNNNNNNNNNNIL). The segment covering 763–774 (SNTLTSSLINEP) has biased composition (polar residues). Residues 775–788 (NQQHQHQQHQQQNQ) show a composition bias toward low complexity. Positions 853–903 (IVNSQQQQQQQQQQQQQQQQQQQQQQQQQQQQQQQQQQQQQQHNNTQNINN) form a coiled coil. Over residues 1398-1453 (QQPLPTSKTSSSSSSTSSEATPYLSSSVPPSIVTSTPSTTPMISSSNPNTSSLPTS) the composition is skewed to low complexity. The interval 1398–1455 (QQPLPTSKTSSSSSSTSSEATPYLSSSVPPSIVTSTPSTTPMISSSNPNTSSLPTSER) is disordered.

This is an uncharacterized protein from Dictyostelium discoideum (Social amoeba).